The following is a 219-amino-acid chain: 7-cyano-7-deazaguanine synthase (219 aa).

10-20 (FSGGQDSTTCL) is an ATP binding site. Residues Cys186, Cys195, Cys198, and Cys201 each contribute to the Zn(2+) site.

The protein belongs to the QueC family. As to quaternary structure, homodimer. Zn(2+) is required as a cofactor.

The catalysed reaction is 7-carboxy-7-deazaguanine + NH4(+) + ATP = 7-cyano-7-deazaguanine + ADP + phosphate + H2O + H(+). It functions in the pathway purine metabolism; 7-cyano-7-deazaguanine biosynthesis. Catalyzes the ATP-dependent conversion of 7-carboxy-7-deazaguanine (CDG) to 7-cyano-7-deazaguanine (preQ(0)). This chain is 7-cyano-7-deazaguanine synthase, found in Bacillus velezensis (strain DSM 23117 / BGSC 10A6 / LMG 26770 / FZB42) (Bacillus amyloliquefaciens subsp. plantarum).